The following is a 249-amino-acid chain: Imidazole glycerol phosphate synthase subunit HisF (249 aa).

Residues Asp-11 and Asp-130 contribute to the active site.

It belongs to the HisA/HisF family. As to quaternary structure, heterodimer of HisH and HisF.

The protein localises to the cytoplasm. The enzyme catalyses 5-[(5-phospho-1-deoxy-D-ribulos-1-ylimino)methylamino]-1-(5-phospho-beta-D-ribosyl)imidazole-4-carboxamide + L-glutamine = D-erythro-1-(imidazol-4-yl)glycerol 3-phosphate + 5-amino-1-(5-phospho-beta-D-ribosyl)imidazole-4-carboxamide + L-glutamate + H(+). It participates in amino-acid biosynthesis; L-histidine biosynthesis; L-histidine from 5-phospho-alpha-D-ribose 1-diphosphate: step 5/9. Functionally, IGPS catalyzes the conversion of PRFAR and glutamine to IGP, AICAR and glutamate. The HisF subunit catalyzes the cyclization activity that produces IGP and AICAR from PRFAR using the ammonia provided by the HisH subunit. The sequence is that of Imidazole glycerol phosphate synthase subunit HisF from Exiguobacterium sibiricum (strain DSM 17290 / CCUG 55495 / CIP 109462 / JCM 13490 / 255-15).